Consider the following 235-residue polypeptide: Aspartate/glutamate leucyltransferase (235 aa).

It belongs to the R-transferase family. Bpt subfamily.

Its subcellular location is the cytoplasm. The catalysed reaction is N-terminal L-glutamyl-[protein] + L-leucyl-tRNA(Leu) = N-terminal L-leucyl-L-glutamyl-[protein] + tRNA(Leu) + H(+). The enzyme catalyses N-terminal L-aspartyl-[protein] + L-leucyl-tRNA(Leu) = N-terminal L-leucyl-L-aspartyl-[protein] + tRNA(Leu) + H(+). Functions in the N-end rule pathway of protein degradation where it conjugates Leu from its aminoacyl-tRNA to the N-termini of proteins containing an N-terminal aspartate or glutamate. This chain is Aspartate/glutamate leucyltransferase, found in Pseudomonas putida (strain ATCC 47054 / DSM 6125 / CFBP 8728 / NCIMB 11950 / KT2440).